The primary structure comprises 1843 residues: Zinc finger protein 142 (1843 aa).

C2H2-type zinc fingers lie at residues 103-127 and 164-186; these read YFCE…TETH and LPCP…FKIH. Positions 294–357 are disordered; that stretch reads PAAKLPPGHR…LEGHVGSGTE (64 aa). Over residues 318–329 the composition is skewed to acidic residues; sequence SAEEEDAEEEES. Residues 330-340 show a composition bias toward basic and acidic residues; the sequence is VTQKDSQKVMD. Ser-354 bears the Phosphoserine mark. The C2H2-type 3 zinc finger occupies 363–385; that stretch reads HMCPECKRCFKKRTHLVEHLHLH. The segment at 391–413 adopts a C2H2-type 4; degenerate zinc-finger fold; the sequence is LQCPNCQKFFTSKSKLKTHLLRE. 7 consecutive C2H2-type zinc fingers follow at residues 453–475, 543–566, 601–623, 629–651, 657–679, 685–707, and 744–767; these read YACP…LKSH, FHCP…KQGH, HQCS…MLLH, HKCE…MLTH, YMCT…MRKH, YQCN…KLRH, and YPCR…NCKH. Residue Lys-794 forms a Glycyl lysine isopeptide (Lys-Gly) (interchain with G-Cter in SUMO2) linkage. Disordered regions lie at residues 819–888 and 1103–1177; these read QCLA…LGEV and PKPV…TGTS. Over residues 837-846 the composition is skewed to basic and acidic residues; the sequence is PEREDREHEI. The span at 1157–1167 shows a compositional bias: pro residues; the sequence is LPTPSDFPTSP. Over residues 1168–1177 the composition is skewed to polar residues; sequence PENSLPTGTS. C2H2-type zinc fingers lie at residues 1331–1354, 1388–1411, 1446–1469, 1514–1537, 1608–1630, 1636–1658, 1664–1686, 1692–1715, and 1721–1743; these read LQCG…RLKH, IPCS…LRVH, FSCT…LRRH, LECG…RQHH, YKCT…SRIH, YHCH…MRIH, YLCP…MTKH, YQCP…ETRH, and FMCE…LRKH. Glycyl lysine isopeptide (Lys-Gly) (interchain with G-Cter in SUMO2) cross-links involve residues Lys-1353 and Lys-1402. Residue Lys-1747 forms a Glycyl lysine isopeptide (Lys-Gly) (interchain with G-Cter in SUMO2) linkage. The C2H2-type 21 zinc finger occupies 1749-1771; that stretch reads YVCNVCHRAFRWAAGLRHHALTH. The interval 1795–1843 is disordered; sequence HVRRHHPDQADPNQGVGKDPTTPTVHLHDVKLEDPSPPAPPAPSTGPEG. A compositionally biased stretch (pro residues) spans 1829 to 1843; that stretch reads PSPPAPPAPSTGPEG.

Belongs to the krueppel C2H2-type zinc-finger protein family.

It is found in the nucleus. May be involved in transcriptional regulation. This chain is Zinc finger protein 142, found in Mus musculus (Mouse).